The sequence spans 283 residues: Thymidylate synthase (283 aa).

Arg22 lines the dUMP pocket. The Nucleophile role is filled by Cys160. DUMP is bound by residues 180–183 (RSCD), Asn191, and 221–223 (HIY). Asp183 contacts (6R)-5,10-methylene-5,6,7,8-tetrahydrofolate. Ser282 lines the (6R)-5,10-methylene-5,6,7,8-tetrahydrofolate pocket.

It belongs to the thymidylate synthase family. Bacterial-type ThyA subfamily. As to quaternary structure, homodimer.

It localises to the cytoplasm. The enzyme catalyses dUMP + (6R)-5,10-methylene-5,6,7,8-tetrahydrofolate = 7,8-dihydrofolate + dTMP. It participates in pyrimidine metabolism; dTTP biosynthesis. In terms of biological role, catalyzes the reductive methylation of 2'-deoxyuridine-5'-monophosphate (dUMP) to 2'-deoxythymidine-5'-monophosphate (dTMP) while utilizing 5,10-methylenetetrahydrofolate (mTHF) as the methyl donor and reductant in the reaction, yielding dihydrofolate (DHF) as a by-product. This enzymatic reaction provides an intracellular de novo source of dTMP, an essential precursor for DNA biosynthesis. In Vibrio cholerae serotype O1 (strain ATCC 39541 / Classical Ogawa 395 / O395), this protein is Thymidylate synthase.